A 100-amino-acid chain; its full sequence is Small ribosomal subunit protein uS14c (100 aa).

Belongs to the universal ribosomal protein uS14 family. As to quaternary structure, part of the 30S ribosomal subunit.

The protein localises to the plastid. The protein resides in the chloroplast. In terms of biological role, binds 16S rRNA, required for the assembly of 30S particles. The protein is Small ribosomal subunit protein uS14c of Huperzia lucidula (Shining clubmoss).